Reading from the N-terminus, the 327-residue chain is tRNA uridine(34) hydroxylase (327 aa).

The Rhodanese domain occupies 142–240; the sequence is DDPDTLVIDT…YLEQVPEAES (99 aa). The active-site Cysteine persulfide intermediate is C200.

This sequence belongs to the TrhO family.

The enzyme catalyses uridine(34) in tRNA + AH2 + O2 = 5-hydroxyuridine(34) in tRNA + A + H2O. Its function is as follows. Catalyzes oxygen-dependent 5-hydroxyuridine (ho5U) modification at position 34 in tRNAs. This chain is tRNA uridine(34) hydroxylase, found in Synechococcus sp. (strain CC9605).